Reading from the N-terminus, the 74-residue chain is Protein kish-B (74 aa).

Positions 1 to 22 (MTNVYSFDGILVFGLLFICTCA) are cleaved as a signal peptide. Over 23 to 52 (YLKKVPRLNSWLLSEKKGVWGVFYKAAVIG) the chain is Extracellular. The helical transmembrane segment at 53-73 (TRLHVVVAASCLCMAFYLIFL) threads the bilayer. Residue Lys-74 is a topological domain, cytoplasmic.

Belongs to the KISH family.

The protein localises to the golgi apparatus membrane. Involved in the early part of the secretory pathway. This Danio rerio (Zebrafish) protein is Protein kish-B (tmem167b).